Here is a 338-residue protein sequence, read N- to C-terminus: Glyceraldehyde-3-phosphate dehydrogenase (338 aa).

NAD(+)-binding positions include threonine 11 to isoleucine 12 and glycine 109. Serine 138–asparagine 140 lines the D-glyceraldehyde 3-phosphate pocket. Cysteine 139 serves as the catalytic Nucleophile. Residue arginine 167 coordinates NAD(+). D-glyceraldehyde 3-phosphate is bound by residues threonine 169 and histidine 192–alanine 193. Position 299 (glutamine 299) interacts with NAD(+).

The protein belongs to the glyceraldehyde-3-phosphate dehydrogenase family. As to quaternary structure, homotetramer.

It localises to the cytoplasm. The enzyme catalyses D-glyceraldehyde 3-phosphate + phosphate + NADP(+) = (2R)-3-phospho-glyceroyl phosphate + NADPH + H(+). It catalyses the reaction D-glyceraldehyde 3-phosphate + phosphate + NAD(+) = (2R)-3-phospho-glyceroyl phosphate + NADH + H(+). Its pathway is carbohydrate degradation; glycolysis; pyruvate from D-glyceraldehyde 3-phosphate: step 1/5. In Thermoplasma volcanium (strain ATCC 51530 / DSM 4299 / JCM 9571 / NBRC 15438 / GSS1), this protein is Glyceraldehyde-3-phosphate dehydrogenase.